The following is a 555-amino-acid chain: MKDTVMAYLLENSIKFKGKPNPKAAMGKILGENPDLRSKVKEVNEVISEVLKEIETMSLEEQQAKLDELAPEGLGQKTERKRKEIELKNVKGNVAMRFAPNPSGPLHIGHARASVLNDFFTKKYNGKLVLRLEDTDAKRVLPEAYEMIQEDLNWLGVKVDEVIVQSERLEIYYEYGRKLIEMGHAYVCDCDAEEFRNLREQGIPCKCRDATPEENIVLWEKMLSGEVENVAVRLKTDIAHKNPSIRDFPIFRIERTPHPKNGTKYHVYPLMNLSVTVDDHLLGMTHVLRGKDHIVNTEKQEYIYNYFGWEIPEYIHYGILKIEGPVLSTSKMHAGILSGEYSGWDDARLGTLRALRKRGIRPEALYKLMVEIGIKQADVRFAWENLYAANKDVIDKDARRFFFVESPKKVVISGAENKKIDLRMHPDRSELGNRELLFDGEIYVSDDLEAGKMYRLMELFNIVVERIENDIIYAKYDSDDLAVAKSNRASIIHWIPVKDSIPVTVIDENAENIEGFAEKDFAVVKKDDFVQFERFGFVRVDEKEDNGYICYLTHK.

The short motif at 100–110 (PNPSGPLHIGH) is the 'HIGH' region element.

This sequence belongs to the class-I aminoacyl-tRNA synthetase family. Glutamate--tRNA ligase type 2 subfamily.

The protein localises to the cytoplasm. The enzyme catalyses tRNA(Glu) + L-glutamate + ATP = L-glutamyl-tRNA(Glu) + AMP + diphosphate. Its function is as follows. Catalyzes the attachment of glutamate to tRNA(Glu) in a two-step reaction: glutamate is first activated by ATP to form Glu-AMP and then transferred to the acceptor end of tRNA(Glu). The chain is Glutamate--tRNA ligase from Methanococcus maripaludis (strain C6 / ATCC BAA-1332).